We begin with the raw amino-acid sequence, 74 residues long: Large ribosomal subunit protein bL31 (74 aa).

Zn(2+) is bound by residues Cys-16, Cys-18, Cys-38, and Cys-41.

This sequence belongs to the bacterial ribosomal protein bL31 family. Type A subfamily. As to quaternary structure, part of the 50S ribosomal subunit. Requires Zn(2+) as cofactor.

Binds the 23S rRNA. In Salinispora arenicola (strain CNS-205), this protein is Large ribosomal subunit protein bL31.